The primary structure comprises 178 residues: Large ribosomal subunit protein bL25 (178 aa).

Belongs to the bacterial ribosomal protein bL25 family. CTC subfamily. Part of the 50S ribosomal subunit; part of the 5S rRNA/L5/L18/L25 subcomplex. Contacts the 5S rRNA. Binds to the 5S rRNA independently of L5 and L18.

This is one of the proteins that binds to the 5S RNA in the ribosome where it forms part of the central protuberance. The protein is Large ribosomal subunit protein bL25 of Campylobacter jejuni subsp. jejuni serotype O:23/36 (strain 81-176).